The primary structure comprises 529 residues: Glycylpeptide N-tetradecanoyltransferase (529 aa).

Positions 1-10 are enriched in polar residues; sequence MSEQEGNQSE. The segment at 1-65 is disordered; that stretch reads MSEQEGNQSE…ANPATKLTPS (65 aa). Residues 11–23 are compositionally biased toward basic and acidic residues; the sequence is HQSEHVGESEGKL. Over residues 26-40 the composition is skewed to polar residues; it reads ETPTTSQSTNASTGT. Residues 118 to 121, 252 to 254, and 260 to 264 each bind tetradecanoyl-CoA; these read FKFW, LCV, and SKRLT. Valine 529 acts as the Proton acceptor; via carboxylate in catalysis.

This sequence belongs to the NMT family. Monomer.

Its subcellular location is the cytoplasm. It catalyses the reaction N-terminal glycyl-[protein] + tetradecanoyl-CoA = N-tetradecanoylglycyl-[protein] + CoA + H(+). Functionally, adds a myristoyl group to the N-terminal glycine residue of certain cellular proteins. This Ajellomyces capsulatus (Darling's disease fungus) protein is Glycylpeptide N-tetradecanoyltransferase.